The following is a 123-amino-acid chain: Ribonuclease P protein component 2 (123 aa).

The protein belongs to the eukaryotic/archaeal RNase P protein component 2 family. As to quaternary structure, consists of a catalytic RNA component and at least 4-5 protein subunits.

The protein resides in the cytoplasm. It catalyses the reaction Endonucleolytic cleavage of RNA, removing 5'-extranucleotides from tRNA precursor.. Part of ribonuclease P, a protein complex that generates mature tRNA molecules by cleaving their 5'-ends. The polypeptide is Ribonuclease P protein component 2 (Sulfurisphaera tokodaii (strain DSM 16993 / JCM 10545 / NBRC 100140 / 7) (Sulfolobus tokodaii)).